Consider the following 258-residue polypeptide: MAVTQGIDAHTINQQHRIVIRNFSSFVSLIFTFFACYTFSEHDFKEDLFFRFIVLLPSFSYLILQYLIFFHTTWKGYCKTESTLRNILHSTLIVLLLAFVIINIFSSITFVTDKWNSEDLFFYSIILPSFFIPPTYLLSTSCDFITTSFTATGINILVDLMILLSYLTFLLLLLFLEKAEYRPYFILASFVLILVKSLKEIYLPSRESSSPAASWRVIIFALVFTLAVITHSLSAYVSISTLARYFRLSATGEVLSIS.

This sequence belongs to the UPF0328 family.

The protein is UPF0328 protein ECU02_0090 of Encephalitozoon cuniculi (strain GB-M1) (Microsporidian parasite).